The following is a 204-amino-acid chain: uncharacterized protein (204 aa).

This is an uncharacterized protein from Acinetobacter calcoaceticus.